A 675-amino-acid chain; its full sequence is DNA ligase (675 aa).

NAD(+) is bound by residues Asp-36–Asp-40, Ser-85–Leu-86, and Glu-117. The N6-AMP-lysine intermediate role is filled by Lys-119. Residues Arg-140, Glu-177, Lys-294, and Lys-318 each coordinate NAD(+). Residues Cys-412, Cys-415, Cys-430, and Cys-436 each coordinate Zn(2+). In terms of domain architecture, BRCT spans Ala-597–Glu-675.

This sequence belongs to the NAD-dependent DNA ligase family. LigA subfamily. Requires Mg(2+) as cofactor. The cofactor is Mn(2+).

The enzyme catalyses NAD(+) + (deoxyribonucleotide)n-3'-hydroxyl + 5'-phospho-(deoxyribonucleotide)m = (deoxyribonucleotide)n+m + AMP + beta-nicotinamide D-nucleotide.. In terms of biological role, DNA ligase that catalyzes the formation of phosphodiester linkages between 5'-phosphoryl and 3'-hydroxyl groups in double-stranded DNA using NAD as a coenzyme and as the energy source for the reaction. It is essential for DNA replication and repair of damaged DNA. The sequence is that of DNA ligase from Thioalkalivibrio sulfidiphilus (strain HL-EbGR7).